The following is a 963-amino-acid chain: Isoleucine--tRNA ligase (963 aa).

A 'HIGH' region motif is present at residues Pro66–His76. Position 596 (Glu596) interacts with L-isoleucyl-5'-AMP. A 'KMSKS' region motif is present at residues Lys637–Ser641. Residue Lys640 participates in ATP binding. Zn(2+) contacts are provided by Cys926, Cys929, Cys946, and Cys949.

The protein belongs to the class-I aminoacyl-tRNA synthetase family. IleS type 1 subfamily. In terms of assembly, monomer. It depends on Zn(2+) as a cofactor.

Its subcellular location is the cytoplasm. It catalyses the reaction tRNA(Ile) + L-isoleucine + ATP = L-isoleucyl-tRNA(Ile) + AMP + diphosphate. Catalyzes the attachment of isoleucine to tRNA(Ile). As IleRS can inadvertently accommodate and process structurally similar amino acids such as valine, to avoid such errors it has two additional distinct tRNA(Ile)-dependent editing activities. One activity is designated as 'pretransfer' editing and involves the hydrolysis of activated Val-AMP. The other activity is designated 'posttransfer' editing and involves deacylation of mischarged Val-tRNA(Ile). The sequence is that of Isoleucine--tRNA ligase from Cupriavidus pinatubonensis (strain JMP 134 / LMG 1197) (Cupriavidus necator (strain JMP 134)).